The chain runs to 477 residues: Solute carrier family 2, facilitated glucose transporter member 8 (477 aa).

Residues 1–25 (MSPEDPQETQPLLRPPEARTPRGRR) are Cytoplasmic-facing. Residues 12–13 (LL) carry the Dileucine internalization motif motif. The helical transmembrane segment at 26-46 (VFLASFAAALGPLSFGFALGY) threads the bilayer. At 47-70 (SSPAIPSLRRTAPPALRLGDNAAS) the chain is on the extracellular side. A helical transmembrane segment spans residues 71 to 91 (WFGAVVTLGAAAGGILGGWLL). The Cytoplasmic portion of the chain corresponds to 92–96 (DRAGR). Residues 97-117 (KLSLLLCTVPFVTGFAVITAA) traverse the membrane as a helical segment. The Extracellular segment spans residues 118-127 (RDVWMLLGGR). A helical membrane pass occupies residues 128–148 (LLTGLACGVASLVAPVYISEI). Topologically, residues 149-156 (AYPAVRGL) are cytoplasmic. The helical transmembrane segment at 157 to 177 (LGSCVQLMVVTGILLAYVAGW) threads the bilayer. Gln162 provides a ligand contact to D-glucose. At 178-182 (VLEWR) the chain is on the extracellular side. A helical membrane pass occupies residues 183-203 (WLAVLGCVPPTLMLLLMCYMP). The Cytoplasmic segment spans residues 204–257 (ETPRFLLTQHQYQEAMAALRFLWGSEEGWEEPPVGAEHQGFQLALLRRPGIYKP). A helical transmembrane segment spans residues 258-278 (LIIGISLMVFQQLSGVNAIMF). D-glucose contacts are provided by residues 268–269 (QQ) and Asn274. The Extracellular segment spans residues 279–293 (YANSIFEEAKFKDSS). A helical membrane pass occupies residues 294–314 (LASVTVGIIQVLFTAVAALIM). The Cytoplasmic portion of the chain corresponds to 315-320 (DRAGRR). A helical transmembrane segment spans residues 321-341 (LLLALSGVIMVFSMSAFGTYF). Over 342-367 (KLTQSLPSNSSHVGLVPIAAEPVDVQ) the chain is Extracellular. A glycan (N-linked (GlcNAc...) asparagine) is linked at Asn350. A helical transmembrane segment spans residues 368–388 (VGLAWLAVGSMCLFIAGFAVG). At 389 to 404 (WGPIPWLLMSEIFPLH) the chain is on the cytoplasmic side. Trp394 is a binding site for D-glucose. Residues 405 to 425 (VKGVATGICVLTNWFMAFLVT) form a helical membrane-spanning segment. Topologically, residues 426-438 (KEFSSVMEMLRPY) are extracellular. The helical transmembrane segment at 439 to 459 (GAFWLTAAFCALSVLFTLTVV) threads the bilayer. The Cytoplasmic segment spans residues 460–477 (PETKGRTLEQVTAHFEGR).

This sequence belongs to the major facilitator superfamily. Sugar transporter (TC 2.A.1.1) family. Glucose transporter subfamily. Interacts with AP2B1. Also able to mediate the transport of dehydroascorbate. As to expression, highest level of expression in placenta and testis. Highly expressed in adult and pubertal testis, but not prepubertal testis. Lower levels of expression in brain, liver, heart, kidney, fat and skeletal muscle.

It localises to the cell membrane. It is found in the cytoplasmic vesicle membrane. The enzyme catalyses D-glucose(out) = D-glucose(in). The catalysed reaction is D-fructose(out) = D-fructose(in). It catalyses the reaction L-dehydroascorbate(out) = L-dehydroascorbate(in). It carries out the reaction alpha,alpha-trehalose(in) = alpha,alpha-trehalose(out). Inhibited by cytochalasin B. In terms of biological role, insulin-regulated facilitative hexose transporter that mediates the transport of glucose and fructose. Facilitates hepatic influx of dietary trehalose, which in turn inhibits glucose and fructose influx triggering a starvation signal and hepatic autophagy through activation of AMPK and ULK1. Also able to mediate the transport of dehydroascorbate. This chain is Solute carrier family 2, facilitated glucose transporter member 8, found in Mus musculus (Mouse).